The chain runs to 886 residues: MILLKELQIKNFRSHSDSKIEFDTGINLIAGRNGAGKSSILEAILVAFYGLKPATLRKNDLVRVNSSGYSLSLTFSLNGDDYTISRKSNGESILTGKEIVEGDSNITEWVERHLCPAHVFTGAIYVRQGEIDSIIRDDESRERIIRQITRIEDYENAWKNLGAVIRMLEREKERLKEFLSQEEQIKRQKEEKKAEIERISEEIKSIESLREKLSEEVRNLESRLKELEEHKSRLESLRKQESSVLQEVRGLEEKLRELEKQLKEVVERIEDLEKKAKEVKELKPKAERYSILEKLLSEINQALRDVEKREGDLTREAAGIQAQLKKAEEDNSKLEEITKRIEELERELERFEKSHRLLETLKPKMDRMQGIKAKLEEKNLTPDKVEKMYDLLSKAKEEEKEITEKLKKLIAKKSSLKTRGAQLKKAVEELKSAERTCPVCGRELDEEHRKNIMAEYTREMKRIAEELAKADEIEKKLKERLEKVEKALEKQETVLKYRQMVDELKALENELSSHDAEKLSAESEEYRKVKERLDGLRGQQKILLSSASRIKELKSSLREIEEALKNVESERGELHRKIREEGFESLEELEREVQSLRPFYNKWLELKDAESRLESELKRREKLEDEISEAIAKLEEANGKAEEIRGQIDELLRIYSEEEHRRLSDEHLRKSKELAGLKSRLETLRESLQSAEKDLKFLEEQLAKMDEYRKKVEVFEKIAIPELTRIREKFRKYRNLVAENSMREVERYASQIFEELTEGKYSGVRLKKTTERGKEKLKVFVVYQGEEREIGFLSGGEIIALGLAFRLALSMFMIRGKIPLLILDEPTPFLDEERRRKLVDITTNYLRKIPQVIIVSHDEELKDAADKVIFVESQGGVSRVRYVEAQ.

ATP-binding positions include Arg-13, 33-39 (NGAGKSS), and Gln-128. Coiled-coil stretches lie at residues 183–360 (EQIK…LLET) and 400–433 (KEIT…LKSA). The Zinc-hook domain maps to 392 to 489 (LSKAKEEEKE…RLEKVEKALE (98 aa)). Cys-437 and Cys-440 together coordinate Zn(2+). Coiled coils occupy residues 489-518 (EKQE…DAEK) and 545-713 (SSAS…KKVE). ATP is bound at residue 792–797 (FLSGGE).

The protein belongs to the SMC family. RAD50 subfamily. In terms of assembly, homodimer. Forms a heterotetramer composed of two Mre11 subunits and two Rad50 subunits. The cofactor is Zn(2+).

In terms of biological role, part of the Rad50/Mre11 complex, which is involved in the early steps of DNA double-strand break (DSB) repair. The complex may facilitate opening of the processed DNA ends to aid in the recruitment of HerA and NurA. Rad50 controls the balance between DNA end bridging and DNA resection via ATP-dependent structural rearrangements of the Rad50/Mre11 complex. In Archaeoglobus fulgidus (strain ATCC 49558 / DSM 4304 / JCM 9628 / NBRC 100126 / VC-16), this protein is DNA double-strand break repair Rad50 ATPase.